The primary structure comprises 166 residues: Regulatory protein RecX (166 aa).

The protein belongs to the RecX family.

The protein resides in the cytoplasm. Its function is as follows. Modulates RecA activity. The protein is Regulatory protein RecX of Salmonella paratyphi A (strain ATCC 9150 / SARB42).